The following is a 493-amino-acid chain: Guanosine-5'-triphosphate,3'-diphosphate pyrophosphatase (493 aa).

This sequence belongs to the GppA/Ppx family. GppA subfamily.

It carries out the reaction guanosine 3'-diphosphate 5'-triphosphate + H2O = guanosine 3',5'-bis(diphosphate) + phosphate + H(+). It participates in purine metabolism; ppGpp biosynthesis; ppGpp from GTP: step 2/2. Catalyzes the conversion of pppGpp to ppGpp. Guanosine pentaphosphate (pppGpp) is a cytoplasmic signaling molecule which together with ppGpp controls the 'stringent response', an adaptive process that allows bacteria to respond to amino acid starvation, resulting in the coordinated regulation of numerous cellular activities. This is Guanosine-5'-triphosphate,3'-diphosphate pyrophosphatase from Salmonella choleraesuis (strain SC-B67).